Here is a 545-residue protein sequence, read N- to C-terminus: Reticulon-2 (545 aa).

2 disordered regions span residues M1 to E183 and S199 to P250. Over residues A14–T25 the composition is skewed to low complexity. A compositionally biased stretch (basic and acidic residues) spans S32–F43. At S44 the chain carries Phosphoserine. The span at R135 to H146 shows a compositional bias: basic and acidic residues. Low complexity predominate over residues G157–T166. Positions S199–G230 are enriched in polar residues. Phosphoserine occurs at positions 227 and 229. Positions V345–E545 constitute a Reticulon domain. 2 helical membrane-spanning segments follow: residues L368 to L388 and L463 to L483.

In terms of assembly, interacts with isoform 1 but not isoform 3 of SPAST. Interacts with BACE1. Interacts (via first transmembrane domain) with ARL6IP5/GTRAP3-18. Interacts (via N-terminus) with SLC1A1/EAAC1; the interaction promotes cell surface expression of SLC1A1. Interacts with TMEM33. In terms of tissue distribution, highly expressed in skeletal muscle.

The protein localises to the endoplasmic reticulum membrane. The protein resides in the sarcoplasmic reticulum membrane. Its subcellular location is the cell membrane. It localises to the sarcolemma. It is found in the T-tubule. The protein localises to the cytoplasm. The protein resides in the myofibril. Its subcellular location is the sarcomere. It localises to the z line. It is found in the cytoskeleton. In terms of biological role, inhibits amyloid precursor protein processing, probably by blocking BACE1 activity. Enhances trafficking of the glutamate transporter SLC1A1/EAAC1 from the endoplasmic reticulum to the cell surface. Plays a role in the translocation of SLC2A4/GLUT4 from intracellular membranes to the cell membrane which facilitates the uptake of glucose into the cell. This Homo sapiens (Human) protein is Reticulon-2 (RTN2).